Reading from the N-terminus, the 128-residue chain is Ribosome-binding factor A (128 aa).

The protein belongs to the RbfA family. As to quaternary structure, monomer. Binds 30S ribosomal subunits, but not 50S ribosomal subunits or 70S ribosomes.

It is found in the cytoplasm. One of several proteins that assist in the late maturation steps of the functional core of the 30S ribosomal subunit. Associates with free 30S ribosomal subunits (but not with 30S subunits that are part of 70S ribosomes or polysomes). Required for efficient processing of 16S rRNA. May interact with the 5'-terminal helix region of 16S rRNA. This is Ribosome-binding factor A from Pseudomonas paraeruginosa (strain DSM 24068 / PA7) (Pseudomonas aeruginosa (strain PA7)).